Reading from the N-terminus, the 822-residue chain is Tyrosine-protein kinase Fer (822 aa).

One can recognise an F-BAR domain in the interval 1–259; sequence MGFGSDLKNS…SVEQIDPSTE (259 aa). The important for interaction with membranes containing phosphoinositides stretch occupies residues 1–300; that stretch reads MGFGSDLKNS…QANEIMWNNL (300 aa). Coiled-coil stretches lie at residues 123-185 and 301-390; these read AEMI…HNQY and TAES…KVQE. The residue at position 402 (Tyr402) is a Phosphotyrosine. At Ser434 the chain carries Phosphoserine. Positions 460–550 constitute an SH2 domain; sequence WYHGAIPRIE…KSGVVLLNPI (91 aa). A Protein kinase domain is found at 563–816; that stretch reads VILGELLGKG…FSELQKELTI (254 aa). ATP-binding positions include 569–577 and Lys591; that span reads LGKGNFGEV. Tyr615 carries the phosphotyrosine; by autocatalysis modification. The active-site Proton acceptor is the Asp684. Tyr714 is modified (phosphotyrosine; by autocatalysis).

It belongs to the protein kinase superfamily. Tyr protein kinase family. Fes/fps subfamily. In terms of assembly, homotrimer. Interacts with ARHGDIA, IRS1, JAK1, NRP1, PIK3R1, PLEC and TMF1. Interacts with PPP1CA and regulates its phosphorylation at 'Thr-320'. Interacts with CTNND1, EGFR, FLT3, PECAM1, PDGFR and STAT3. Interacts (via SH2 domain) with CTTN. Interacts with HSP90; this stabilizes phosphorylated FER and protects FER against proteasomal degradation. Component of a complex that contains at least FER, CTTN and PTK2/FAK1. In terms of processing, autophosphorylated. Post-translationally, polyubiquitinated; this leads to proteasomal degradation. Isoform 1 is detected in normal colon and in fibroblasts (at protein level). Isoform 3 is detected in normal testis, in colon carcinoma-derived metastases in lung, liver and ovary, and in colon carcinoma and hepato carcinoma cell lines (at protein level). Isoform 3 is not detected in normal colon or in normal fibroblasts (at protein level). Widely expressed.

It is found in the cytoplasm. The protein resides in the cytoskeleton. It localises to the cell membrane. Its subcellular location is the cell projection. The protein localises to the cell junction. It is found in the membrane. The protein resides in the nucleus. It localises to the cell cortex. It carries out the reaction L-tyrosyl-[protein] + ATP = O-phospho-L-tyrosyl-[protein] + ADP + H(+). With respect to regulation, activated by phosphatidic acid binding. Activated by hydrogen peroxide (in vitro). Activated by reactive oxygen species (ROS). Its function is as follows. Tyrosine-protein kinase that acts downstream of cell surface receptors for growth factors and plays a role in the regulation of the actin cytoskeleton, microtubule assembly, lamellipodia formation, cell adhesion, cell migration and chemotaxis. Acts downstream of EGFR, KIT, PDGFRA and PDGFRB. Acts downstream of EGFR to promote activation of NF-kappa-B and cell proliferation. May play a role in the regulation of the mitotic cell cycle. Plays a role in the insulin receptor signaling pathway and in activation of phosphatidylinositol 3-kinase. Acts downstream of the activated FCER1 receptor and plays a role in FCER1 (high affinity immunoglobulin epsilon receptor)-mediated signaling in mast cells. Plays a role in the regulation of mast cell degranulation. Plays a role in leukocyte recruitment and diapedesis in response to bacterial lipopolysaccharide (LPS). Plays a role in synapse organization, trafficking of synaptic vesicles, the generation of excitatory postsynaptic currents and neuron-neuron synaptic transmission. Plays a role in neuronal cell death after brain damage. Phosphorylates CTTN, CTNND1, PTK2/FAK1, GAB1, PECAM1 and PTPN11. May phosphorylate JUP and PTPN1. Can phosphorylate STAT3, but the biological relevance of this depends on cell type and stimulus. This chain is Tyrosine-protein kinase Fer (FER), found in Homo sapiens (Human).